A 297-amino-acid chain; its full sequence is 4-hydroxy-tetrahydrodipicolinate synthase (297 aa).

Thr45 lines the pyruvate pocket. Catalysis depends on Tyr133, which acts as the Proton donor/acceptor. Lys161 (schiff-base intermediate with substrate) is an active-site residue. Ile203 serves as a coordination point for pyruvate.

Belongs to the DapA family. Homotetramer; dimer of dimers.

The protein localises to the cytoplasm. It carries out the reaction L-aspartate 4-semialdehyde + pyruvate = (2S,4S)-4-hydroxy-2,3,4,5-tetrahydrodipicolinate + H2O + H(+). Its pathway is amino-acid biosynthesis; L-lysine biosynthesis via DAP pathway; (S)-tetrahydrodipicolinate from L-aspartate: step 3/4. In terms of biological role, catalyzes the condensation of (S)-aspartate-beta-semialdehyde [(S)-ASA] and pyruvate to 4-hydroxy-tetrahydrodipicolinate (HTPA). The protein is 4-hydroxy-tetrahydrodipicolinate synthase of Buchnera aphidicola subsp. Cinara cedri (strain Cc).